Consider the following 524-residue polypeptide: 2-isopropylmalate synthase (524 aa).

Positions 12-274 (VIIFDTTLRD…WNRIETTMLT (263 aa)) constitute a Pyruvate carboxyltransferase domain. D21, H209, H211, and N245 together coordinate Mn(2+). Positions 398–524 (KLMSLTVIAG…EDAPAVAVAG (127 aa)) are regulatory domain.

This sequence belongs to the alpha-IPM synthase/homocitrate synthase family. LeuA type 1 subfamily. As to quaternary structure, homodimer. It depends on Mn(2+) as a cofactor.

The protein localises to the cytoplasm. The enzyme catalyses 3-methyl-2-oxobutanoate + acetyl-CoA + H2O = (2S)-2-isopropylmalate + CoA + H(+). It participates in amino-acid biosynthesis; L-leucine biosynthesis; L-leucine from 3-methyl-2-oxobutanoate: step 1/4. Catalyzes the condensation of the acetyl group of acetyl-CoA with 3-methyl-2-oxobutanoate (2-ketoisovalerate) to form 3-carboxy-3-hydroxy-4-methylpentanoate (2-isopropylmalate). The chain is 2-isopropylmalate synthase from Rhodopseudomonas palustris (strain ATCC BAA-98 / CGA009).